Here is a 319-residue protein sequence, read N- to C-terminus: Aspartate carbamoyltransferase catalytic subunit (319 aa).

Residues R65 and T66 each contribute to the carbamoyl phosphate site. Residue K93 participates in L-aspartate binding. Positions 115, 149, and 152 each coordinate carbamoyl phosphate. R182 and R237 together coordinate L-aspartate. Positions 278 and 279 each coordinate carbamoyl phosphate.

Belongs to the aspartate/ornithine carbamoyltransferase superfamily. ATCase family. As to quaternary structure, heterododecamer (2C3:3R2) of six catalytic PyrB chains organized as two trimers (C3), and six regulatory PyrI chains organized as three dimers (R2).

It catalyses the reaction carbamoyl phosphate + L-aspartate = N-carbamoyl-L-aspartate + phosphate + H(+). It participates in pyrimidine metabolism; UMP biosynthesis via de novo pathway; (S)-dihydroorotate from bicarbonate: step 2/3. In terms of biological role, catalyzes the condensation of carbamoyl phosphate and aspartate to form carbamoyl aspartate and inorganic phosphate, the committed step in the de novo pyrimidine nucleotide biosynthesis pathway. The sequence is that of Aspartate carbamoyltransferase catalytic subunit from Azoarcus sp. (strain BH72).